The following is a 182-amino-acid chain: A-type ATP synthase subunit E (182 aa).

It belongs to the V-ATPase E subunit family. In terms of assembly, has multiple subunits with at least A(3), B(3), C, D, E, F, H, I and proteolipid K(x).

The protein resides in the cell membrane. Component of the A-type ATP synthase that produces ATP from ADP in the presence of a proton gradient across the membrane. This chain is A-type ATP synthase subunit E, found in Methanothrix thermoacetophila (strain DSM 6194 / JCM 14653 / NBRC 101360 / PT) (Methanosaeta thermophila).